We begin with the raw amino-acid sequence, 94 residues long: Cell division protein FtsB (94 aa).

The Cytoplasmic segment spans residues 1 to 8; sequence MRLRSPYW. Residues 9–26 traverse the membrane as a helical segment; sequence LFVVLILALAGLQYRLWV. At 27 to 94 the chain is on the periplasmic side; the sequence is GDGSLAQVRD…DGETLYQLAK (68 aa). Residues 31 to 78 adopt a coiled-coil conformation; sequence LAQVRDLQKQIADQHGENERLLERNRILEAEVAELKKGTETVEERARH.

It belongs to the FtsB family. In terms of assembly, part of a complex composed of FtsB, FtsL and FtsQ.

Its subcellular location is the cell inner membrane. Essential cell division protein. May link together the upstream cell division proteins, which are predominantly cytoplasmic, with the downstream cell division proteins, which are predominantly periplasmic. This chain is Cell division protein FtsB, found in Pseudomonas aeruginosa (strain ATCC 15692 / DSM 22644 / CIP 104116 / JCM 14847 / LMG 12228 / 1C / PRS 101 / PAO1).